A 283-amino-acid chain; its full sequence is Polyamine aminopropyltransferase (283 aa).

The region spanning 2 to 237 (ELWYTEEHTD…GHWLFGFASK (236 aa)) is the PABS domain. Q31 lines the S-methyl-5'-thioadenosine pocket. H62 and D86 together coordinate spermidine. S-methyl-5'-thioadenosine contacts are provided by residues E106 and 137–138 (DG). D155 serves as the catalytic Proton acceptor. 155–158 (DSTD) serves as a coordination point for spermidine. P162 lines the S-methyl-5'-thioadenosine pocket.

Belongs to the spermidine/spermine synthase family. As to quaternary structure, homodimer or homotetramer.

Its subcellular location is the cytoplasm. It carries out the reaction S-adenosyl 3-(methylsulfanyl)propylamine + putrescine = S-methyl-5'-thioadenosine + spermidine + H(+). The protein operates within amine and polyamine biosynthesis; spermidine biosynthesis; spermidine from putrescine: step 1/1. Its function is as follows. Catalyzes the irreversible transfer of a propylamine group from the amino donor S-adenosylmethioninamine (decarboxy-AdoMet) to putrescine (1,4-diaminobutane) to yield spermidine. The sequence is that of Polyamine aminopropyltransferase from Clostridium perfringens (strain ATCC 13124 / DSM 756 / JCM 1290 / NCIMB 6125 / NCTC 8237 / Type A).